Consider the following 163-residue polypeptide: D-aminoacyl-tRNA deacylase (163 aa).

The Gly-cisPro motif, important for rejection of L-amino acids signature appears at 141-142; that stretch reads GP.

This sequence belongs to the DTD family. Homodimer.

It is found in the cytoplasm. The catalysed reaction is glycyl-tRNA(Ala) + H2O = tRNA(Ala) + glycine + H(+). The enzyme catalyses a D-aminoacyl-tRNA + H2O = a tRNA + a D-alpha-amino acid + H(+). In terms of biological role, an aminoacyl-tRNA editing enzyme that deacylates mischarged D-aminoacyl-tRNAs. Also deacylates mischarged glycyl-tRNA(Ala), protecting cells against glycine mischarging by AlaRS. Acts via tRNA-based rather than protein-based catalysis; rejects L-amino acids rather than detecting D-amino acids in the active site. By recycling D-aminoacyl-tRNA to D-amino acids and free tRNA molecules, this enzyme counteracts the toxicity associated with the formation of D-aminoacyl-tRNA entities in vivo and helps enforce protein L-homochirality. The polypeptide is D-aminoacyl-tRNA deacylase (Neisseria meningitidis serogroup A / serotype 4A (strain DSM 15465 / Z2491)).